We begin with the raw amino-acid sequence, 295 residues long: uncharacterized protein (295 aa).

The first 19 residues, 1 to 19, serve as a signal peptide directing secretion; that stretch reads MHKLLLIITVFSTFNVAQA.

This is an uncharacterized protein from Rickettsia typhi (strain ATCC VR-144 / Wilmington).